A 181-amino-acid polypeptide reads, in one-letter code: UPF0232 protein MAP_0004 (181 aa).

A compositionally biased stretch (polar residues) spans 1–11 (MSDDQSPSPSG). Disordered stretches follow at residues 1–70 (MSDD…PQPL) and 161–181 (APSW…DTYG). Residues 18-39 (LVRRTLEEARAAARAQGKDAGR) are compositionally biased toward basic and acidic residues. The span at 40–50 (GRAAAPTPRRV) shows a compositional bias: low complexity.

Belongs to the UPF0232 family.

This is UPF0232 protein MAP_0004 from Mycolicibacterium paratuberculosis (strain ATCC BAA-968 / K-10) (Mycobacterium paratuberculosis).